Here is a 1013-residue protein sequence, read N- to C-terminus: 2-oxoglutarate dehydrogenase, mitochondrial (1013 aa).

A mitochondrion-targeting transit peptide spans 1–39; it reads MFTLKQVINKSIQTSMKNGVMSSAVKRSFSTVGGINQPK. Residues arginine 302, aspartate 403, asparagine 436, isoleucine 438, and glutamine 664 each coordinate thiamine diphosphate. Residues aspartate 403, asparagine 436, and isoleucine 438 each contribute to the Mg(2+) site.

It belongs to the alpha-ketoglutarate dehydrogenase family. As to quaternary structure, homodimer. Component of the 2-oxoglutarate dehydrogenase complex. Thiamine diphosphate serves as cofactor. Requires Mg(2+) as cofactor.

The protein resides in the mitochondrion matrix. It catalyses the reaction N(6)-[(R)-lipoyl]-L-lysyl-[protein] + 2-oxoglutarate + H(+) = N(6)-[(R)-S(8)-succinyldihydrolipoyl]-L-lysyl-[protein] + CO2. Its function is as follows. The 2-oxoglutarate dehydrogenase complex catalyzes the overall conversion of 2-oxoglutarate to succinyl-CoA and CO(2). It contains multiple copies of three enzymatic components: 2-oxoglutarate dehydrogenase (E1), dihydrolipoamide succinyltransferase (E2) and lipoamide dehydrogenase (E3). The polypeptide is 2-oxoglutarate dehydrogenase, mitochondrial (ogdh) (Dictyostelium discoideum (Social amoeba)).